The primary structure comprises 333 residues: L-lactate dehydrogenase B chain (333 aa).

Residues 29–57 (GQVG…LEDK) and arginine 99 contribute to the NAD(+) site. Substrate is bound by residues arginine 106, asparagine 138, and arginine 169. Asparagine 138 provides a ligand contact to NAD(+). Histidine 193 acts as the Proton acceptor in catalysis. Threonine 248 serves as a coordination point for substrate.

This sequence belongs to the LDH/MDH superfamily. LDH family. In terms of assembly, homotetramer.

The protein resides in the cytoplasm. The catalysed reaction is (S)-lactate + NAD(+) = pyruvate + NADH + H(+). It functions in the pathway fermentation; pyruvate fermentation to lactate; (S)-lactate from pyruvate: step 1/1. Functionally, interconverts simultaneously and stereospecifically pyruvate and lactate with concomitant interconversion of NADH and NAD(+). This chain is L-lactate dehydrogenase B chain (LDHB), found in Anas platyrhynchos (Mallard).